The sequence spans 209 residues: tRNA (guanine-N(7)-)-methyltransferase (209 aa).

S-adenosyl-L-methionine is bound by residues Asp-35, Glu-60, Asn-87, and Asp-113. The active site involves Asp-113. The substrate site is built by Lys-117 and Asp-149.

This sequence belongs to the class I-like SAM-binding methyltransferase superfamily. TrmB family.

It catalyses the reaction guanosine(46) in tRNA + S-adenosyl-L-methionine = N(7)-methylguanosine(46) in tRNA + S-adenosyl-L-homocysteine. The protein operates within tRNA modification; N(7)-methylguanine-tRNA biosynthesis. Its function is as follows. Catalyzes the formation of N(7)-methylguanine at position 46 (m7G46) in tRNA. This is tRNA (guanine-N(7)-)-methyltransferase from Prochlorococcus marinus (strain MIT 9515).